A 140-amino-acid chain; its full sequence is Protein S40-1 (140 aa).

The tract at residues 16-58 (YFPIRRREDGNEKENNRPVDFRENSERVWNKSSRRSKTTPLPS) is disordered. Residues 20 to 44 (RRREDGNEKENNRPVDFRENSERVW) show a composition bias toward basic and acidic residues.

It belongs to the senescence regulator S40 family.

Its subcellular location is the cytoplasm. The sequence is that of Protein S40-1 from Arabidopsis thaliana (Mouse-ear cress).